Reading from the N-terminus, the 258-residue chain is Ribosomal RNA small subunit methyltransferase J (258 aa).

S-adenosyl-L-methionine is bound by residues 107–108, 123–124, and aspartate 177; these read RD and ER.

This sequence belongs to the methyltransferase superfamily. RsmJ family.

Its subcellular location is the cytoplasm. The catalysed reaction is guanosine(1516) in 16S rRNA + S-adenosyl-L-methionine = N(2)-methylguanosine(1516) in 16S rRNA + S-adenosyl-L-homocysteine + H(+). Specifically methylates the guanosine in position 1516 of 16S rRNA. This Stutzerimonas stutzeri (strain A1501) (Pseudomonas stutzeri) protein is Ribosomal RNA small subunit methyltransferase J.